The chain runs to 271 residues: GPN-loop GTPase 3 (271 aa).

Position 13–18 (13–18) interacts with GTP; it reads GAGKST. The Gly-Pro-Asn (GPN)-loop; involved in dimer interface signature appears at 70–72; it reads GPN. 173-176 contributes to the GTP binding site; that stretch reads SKLD.

This sequence belongs to the GPN-loop GTPase family. Heterodimers with GPN1 or GPN2. Binds to RNA polymerase II (RNAPII).

Its function is as follows. Small GTPase required for proper nuclear import of RNA polymerase II and III (RNAPII and RNAPIII). May act at an RNAP assembly step prior to nuclear import. This chain is GPN-loop GTPase 3, found in Candida glabrata (strain ATCC 2001 / BCRC 20586 / JCM 3761 / NBRC 0622 / NRRL Y-65 / CBS 138) (Yeast).